The following is a 286-amino-acid chain: Deleted in azoospermia-like (286 aa).

The RRM domain maps to 30 to 105 (NTVFVGGIDI…KKLKLGPAIR (76 aa)). Residues 155–180 (ACPYPSSPPMAIQQIPVGCQQPSYFQ) enclose the DAZ domain.

The protein belongs to the RRM DAZ family. In terms of assembly, interacts with the C-terminus of pabp1 and with epabp. Prior to oocyte maturation, found in a complex with epabp and pum2 proteins and spdy1 mRNA; pum2 dissociates from the complex during maturation. Germ-line specific; expressed in adult testis and ovary. Localized specifically to the oocyte and embryonic germ plasm and to migrating primordial germ cells (PGCs).

It localises to the cytoplasm. Functionally, RNA-binding protein that is required for primordial germ cell (PGC) differentiation and indirectly necessary for the migration of PGCs through the endoderm. May promote meiotic cell division during spermatogenesis. Shows a preference for G- and U-rich RNAs and probably binds the 3'-UTR of target mRNAs. Stimulates the initiation of translation of mRNAs through the recruitment of poly(A)-binding proteins (PABPs). The chain is Deleted in azoospermia-like from Xenopus tropicalis (Western clawed frog).